A 110-amino-acid chain; its full sequence is ATP-dependent Clp protease adapter protein ClpS 2 (110 aa).

Positions 1-24 (MSNDENRSGSPTGPNTSVITKVKP) are disordered. Polar residues predominate over residues 8-19 (SGSPTGPNTSVI).

Belongs to the ClpS family. Binds to the N-terminal domain of the chaperone ClpA.

Functionally, involved in the modulation of the specificity of the ClpAP-mediated ATP-dependent protein degradation. This chain is ATP-dependent Clp protease adapter protein ClpS 2, found in Bradyrhizobium diazoefficiens (strain JCM 10833 / BCRC 13528 / IAM 13628 / NBRC 14792 / USDA 110).